Here is a 330-residue protein sequence, read N- to C-terminus: Malate dehydrogenase (330 aa).

Residue 13-19 (GAAGQIG) coordinates NAD(+). Residues R94 and R100 each coordinate substrate. NAD(+) is bound by residues N107, Q114, and 131–133 (VGN). 2 residues coordinate substrate: N133 and R164. H189 (proton acceptor) is an active-site residue.

This sequence belongs to the LDH/MDH superfamily. MDH type 2 family.

It carries out the reaction (S)-malate + NAD(+) = oxaloacetate + NADH + H(+). Its function is as follows. Catalyzes the reversible oxidation of malate to oxaloacetate. This Deinococcus deserti (strain DSM 17065 / CIP 109153 / LMG 22923 / VCD115) protein is Malate dehydrogenase.